A 435-amino-acid polypeptide reads, in one-letter code: Methanethiol oxidase (435 aa).

Residues 1–24 (MKKHLLAGACALAMGFAVIPGTFA) form the signal peptide.

It belongs to the selenium-binding protein family. Homotetramer. It depends on Cu cation as a cofactor.

It is found in the periplasm. The catalysed reaction is methanethiol + O2 + H2O = hydrogen sulfide + formaldehyde + H2O2 + H(+). The protein operates within organosulfur degradation. With respect to regulation, inhibited by EDTA but not by EGTA. In terms of biological role, catalyzes the oxidation of methanethiol. Can also degrade ethanethiol, but not methanol, methylamine or dimethylsulfide. This is Methanethiol oxidase from Hyphomicrobium sp.